Here is a 371-residue protein sequence, read N- to C-terminus: Peptide chain release factor 2 (371 aa).

Glutamine 253 is subject to N5-methylglutamine.

The protein belongs to the prokaryotic/mitochondrial release factor family. Methylated by PrmC. Methylation increases the termination efficiency of RF2.

The protein localises to the cytoplasm. Its function is as follows. Peptide chain release factor 2 directs the termination of translation in response to the peptide chain termination codons UGA and UAA. The chain is Peptide chain release factor 2 from Mycobacterium sp. (strain KMS).